The primary structure comprises 386 residues: Adiponectin receptor protein 2 (386 aa).

The segment at 1–72 is disordered; it reads MNEPAKHRLG…ECHDDNSQED (72 aa). The Cytoplasmic segment spans residues 1 to 147; the sequence is MNEPAKHRLG…SIFRIHTETG (147 aa). Over residues 15–31 the composition is skewed to basic and acidic residues; sequence PEPDIRLRKGHQLDDTR. Acidic residues predominate over residues 58–72; it reads SPEEPECHDDNSQED. Residues 148–168 form a helical membrane-spanning segment; that stretch reads NIWTHLLGCVFFLCLGIFYMF. Residues 169–181 lie on the Extracellular side of the membrane; that stretch reads RPNISFVAPLQEK. The helical transmembrane segment at 182–202 threads the bilayer; the sequence is VVFGLFFLGAILCLSFSWLFH. Histidine 202 is a Zn(2+) binding site. The Cytoplasmic portion of the chain corresponds to 203–213; it reads TVYCHSEGVSR. The chain crosses the membrane as a helical span at residues 214–234; the sequence is LFSKLDYSGIALLIMGSFVPW. Residues 235-245 lie on the Extracellular side of the membrane; it reads LYYSFYCNPQP. The helical transmembrane segment at 246–266 threads the bilayer; sequence CFIYLIVICVLGIAAIIVSQW. The Cytoplasmic portion of the chain corresponds to 267–273; sequence DMFATPQ. Residues 274–294 traverse the membrane as a helical segment; sequence YRGVRAGVFVGLGLSGIIPTL. Residues 295 to 309 are Extracellular-facing; it reads HYVISEGFLKAATIG. The chain crosses the membrane as a helical span at residues 310–330; sequence QIGWLMLMASLYITGAALYAA. The Cytoplasmic portion of the chain corresponds to 331-348; sequence RIPERFFPGKCDIWFHSH. Positions 348 and 352 each coordinate Zn(2+). Residues 349–369 form a helical membrane-spanning segment; it reads QLFHIFVVAGAFVHFHGVSNL. Residues 370 to 386 lie on the Extracellular side of the membrane; the sequence is QEFRFMIGGGCTEEDAL.

Belongs to the ADIPOR family. In terms of assembly, may form homooligomers and heterooligomers with ADIPOR1. Interacts with APPL2 (via BAR domain); ADIPOQ dissociates this interaction. As to expression, detected in liver and quadriceps muscle (at protein level). Highly expressed in liver. Highly expressed in white adipose tissue, and at intermediate levels in brown adipose tissue. Expressed at intermediate level in heart, kidney, lung and skeletal muscle. Weakly expressed in brain, spleen and testis.

Its subcellular location is the cell membrane. Functionally, receptor for ADIPOQ, an essential hormone secreted by adipocytes that regulates glucose and lipid metabolism. Required for normal body fat and glucose homeostasis. ADIPOQ-binding activates a signaling cascade that leads to increased PPARA activity, and ultimately to increased fatty acid oxidation and glucose uptake. Has intermediate affinity for globular and full-length adiponectin. Required for normal revascularization after chronic ischemia caused by severing of blood vessels. The polypeptide is Adiponectin receptor protein 2 (Mus musculus (Mouse)).